A 1325-amino-acid chain; its full sequence is Bile salt export pump (1325 aa).

The Cytoplasmic segment spans residues 1-62 (MSDAVILRSV…FSSTTDIWLM (62 aa)). Residues 62–385 (MFVGSLCAFL…ASSCLEAFAT (324 aa)) form the ABC transmembrane type-1 1 domain. Residues 63–83 (FVGSLCAFLHGLSHPGVLLIF) form a helical membrane-spanning segment. Residues 84-147 (GTMTDVFIAY…MIKFASYYAG (64 aa)) lie on the Extracellular side of the membrane. N-linked (GlcNAc...) asparagine glycans are attached at residues asparagine 109, asparagine 116, asparagine 122, and asparagine 125. The chain crosses the membrane as a helical span at residues 148 to 168 (IALLVLITGYIQICFWVIAAA). The Cytoplasmic segment spans residues 169–240 (RQIQKMRKIS…FLLGFYQGWK (72 aa)). A helical membrane pass occupies residues 241–261 (LTLVIISVSPLIGIGAAIIGL). The Extracellular segment spans residues 262 to 319 (SVSKFTDYELKAYAKAGSVADEVISSMRTVAAFGGEKKEVERYEKNLVFAQRWGIRKG). The helical transmembrane segment at 320-340 (IVMGFFTGFMWCLIFLCYALA) threads the bilayer. The Cytoplasmic portion of the chain corresponds to 341 to 353 (FWYGSKLVLEDGE). The chain crosses the membrane as a helical span at residues 354-374 (YTAGTLVQIFLSILLGALNLG). N-linked (GlcNAc...) asparagine glycosylation is found at asparagine 375, asparagine 424, and asparagine 440. The Extracellular segment spans residues 375-759 (NASSCLEAFA…KFNAPEWPYM (385 aa)). Residues 420-656 (IEFHNVTFHY…KGVYFTLVTL (237 aa)) enclose the ABC transporter 1 domain. 455-462 (GSSGSGKS) contributes to the ATP binding site. Asparagine 591 is a glycosylation site (N-linked (GlcNAc...) asparagine). One can recognise an ABC transmembrane type-1 2 domain in the interval 759–1047 (MLFGAVGAAV…ASSYTPSYAK (289 aa)). Residues 760–780 (LFGAVGAAVNGSVTPLYAFLF) traverse the membrane as a helical segment. At 781 to 798 (SQILGTFSLPDKEEQRSQ) the chain is on the cytoplasmic side. Residues 799–819 (INGVCLLFVAVGCVSLCTQFL) traverse the membrane as a helical segment. The Extracellular portion of the chain corresponds to 820–894 (QGYAFAKSGE…NSFTNVTVAM (75 aa)). Asparagine 889 carries an N-linked (GlcNAc...) asparagine glycan. A helical membrane pass occupies residues 895-915 (IIAFFFSWKLSLVIMCFFPFL). At 916–983 (ALSGALQTRM…PFKTAFRKAN (68 aa)) the chain is on the cytoplasmic side. A helical transmembrane segment spans residues 984–1004 (VYGFCFGFSQCIVFVANSASY). Residues 1005–1014 (RYGGYLIPNE) lie on the Extracellular side of the membrane. A helical membrane pass occupies residues 1015 to 1035 (GLHFSYVFRVISSVVLSATAL). Residues 1036 to 1325 (GRASSYTPSY…KLVTTGAPIS (290 aa)) lie on the Cytoplasmic side of the membrane. Positions 1082–1320 (VDFVDCKFTY…KGAYYKLVTT (239 aa)) constitute an ABC transporter 2 domain. 1117-1124 (GSSGCGKS) lines the ATP pocket.

This sequence belongs to the ABC transporter superfamily. ABCB family. Multidrug resistance exporter (TC 3.A.1.201) subfamily. Interacts with HAX1. Interacts with the adapter protein complex 2 (AP-2) throught AP2A2 or AP2A1; this interaction regulates cell membrane expression of ABCB11 through its internalization in a clathrin-dependent manner and its subsequent degradation. In terms of processing, N-glycosylated. Ubiquitinated; short-chain ubiquitination regulates cell-Surface expression of ABCB11. As to expression, liver.

Its subcellular location is the apical cell membrane. The protein resides in the recycling endosome membrane. The protein localises to the endosome. It localises to the cell membrane. The enzyme catalyses cholate(in) + ATP + H2O = cholate(out) + ADP + phosphate + H(+). It catalyses the reaction taurocholate(in) + ATP + H2O = taurocholate(out) + ADP + phosphate + H(+). It carries out the reaction glycocholate(in) + ATP + H2O = glycocholate(out) + ADP + phosphate + H(+). The catalysed reaction is glycochenodeoxycholate(in) + ATP + H2O = glycochenodeoxycholate(out) + ADP + phosphate + H(+). The enzyme catalyses taurochenodeoxycholate(in) + ATP + H2O = taurochenodeoxycholate(out) + ADP + phosphate + H(+). It catalyses the reaction glycoursodeoxycholate(in) + ATP + H2O = glycoursodeoxycholate(out) + ADP + phosphate + H(+). It carries out the reaction tauroursodeoxycholate(in) + ATP + H2O = tauroursodeoxycholate(out) + ADP + phosphate + H(+). The catalysed reaction is taurodeoxycholate(in) + ATP + H2O = taurodeoxycholate(out) + ADP + phosphate + H(+). The enzyme catalyses taurolithocholate 3-sulfate(in) + ATP + H2O = taurolithocholate 3-sulfate(out) + ADP + phosphate + H(+). It catalyses the reaction pravastatin(in) + ATP + H2O = pravastatin(out) + ADP + phosphate + H(+). With respect to regulation, the uptake of taurocholate is inhibited by taurolithocholate sulfate with an IC(50) of 9 uM. Pravastatin competitively inhibits the transport of taurocholic acid. Cyclosporin A, glibenclamide, rifampicin and troglitazonestrongly competitively inhibit the transport activity of taurocholate. The canalicular transport activity of taurocholate is strongly dependent on canalicular membrane cholesterol content. The uptake of taurocholate is increased by short- and medium-chain fatty acids. Cholesterol increases transport capacity of taurocholate without affecting the affinity for the substrate. In terms of biological role, catalyzes the transport of the major hydrophobic bile salts, such as taurine and glycine-conjugated cholic acid across the canalicular membrane of hepatocytes in an ATP-dependent manner, therefore participates in hepatic bile acid homeostasis and consequently to lipid homeostasis through regulation of biliary lipid secretion in a bile salts dependent manner. Transports taurine-conjugated bile salts more rapidly than glycine-conjugated bile salts. Also transports non-bile acid compounds, such as pravastatin and fexofenadine in an ATP-dependent manner and may be involved in their biliary excretion. The sequence is that of Bile salt export pump from Canis lupus familiaris (Dog).